A 308-amino-acid polypeptide reads, in one-letter code: Formamidopyrimidine-DNA glycosylase (308 aa).

Catalysis depends on P2, which acts as the Schiff-base intermediate with DNA. E3 functions as the Proton donor in the catalytic mechanism. Catalysis depends on K61, which acts as the Proton donor; for beta-elimination activity. Positions 100, 120, and 181 each coordinate DNA. An FPG-type zinc finger spans residues 267–301 (AVYGQEGRPCPRCGALVRRDAFMNRSSFSCPVCQP). Catalysis depends on R291, which acts as the Proton donor; for delta-elimination activity.

This sequence belongs to the FPG family. Monomer. The cofactor is Zn(2+).

It carries out the reaction Hydrolysis of DNA containing ring-opened 7-methylguanine residues, releasing 2,6-diamino-4-hydroxy-5-(N-methyl)formamidopyrimidine.. It catalyses the reaction 2'-deoxyribonucleotide-(2'-deoxyribose 5'-phosphate)-2'-deoxyribonucleotide-DNA = a 3'-end 2'-deoxyribonucleotide-(2,3-dehydro-2,3-deoxyribose 5'-phosphate)-DNA + a 5'-end 5'-phospho-2'-deoxyribonucleoside-DNA + H(+). Its function is as follows. Involved in base excision repair of DNA damaged by oxidation or by mutagenic agents. Acts as a DNA glycosylase that recognizes and removes damaged bases. Has a preference for oxidized purines, such as 7,8-dihydro-8-oxoguanine (8-oxoG). Has AP (apurinic/apyrimidinic) lyase activity and introduces nicks in the DNA strand. Cleaves the DNA backbone by beta-delta elimination to generate a single-strand break at the site of the removed base with both 3'- and 5'-phosphates. The protein is Formamidopyrimidine-DNA glycosylase of Kineococcus radiotolerans (strain ATCC BAA-149 / DSM 14245 / SRS30216).